A 351-amino-acid chain; its full sequence is Maleylacetate reductase (351 aa).

The protein belongs to the iron-containing alcohol dehydrogenase family. As to quaternary structure, homodimer.

It carries out the reaction 3-oxoadipate + NAD(+) = maleylacetate + NADH + H(+). Its pathway is aromatic compound metabolism. Its function is as follows. Involved in the gamma-resorcylate (2,6-dihydroxybenzoate) catabolism. Catalyzes the reduction of maleylacetate to 3-oxoadipate. In Rhizobium sp. (strain MTP-10005), this protein is Maleylacetate reductase.